The sequence spans 621 residues: Protein Tra (621 aa).

A helical membrane pass occupies residues glycine 126 to isoleucine 146. In terms of domain architecture, FtsK spans glycine 275–arginine 465. An ATP-binding site is contributed by glycine 290 to serine 297. Residues valine 564–isoleucine 584 traverse the membrane as a helical segment.

The protein localises to the cell membrane. In terms of biological role, major protein required for plasmid transfer. In Streptomyces lividans, this protein is Protein Tra (tra).